A 277-amino-acid polypeptide reads, in one-letter code: Large ribosomal subunit protein uL2 (277 aa).

The disordered stretch occupies residues 222–277 (GVAMNPVDHPHGGGEGRTSGGRHPVTPWGKPTKGKKTRSNKATDKFIMRSRHQRKK).

This sequence belongs to the universal ribosomal protein uL2 family. Part of the 50S ribosomal subunit. Forms a bridge to the 30S subunit in the 70S ribosome.

One of the primary rRNA binding proteins. Required for association of the 30S and 50S subunits to form the 70S ribosome, for tRNA binding and peptide bond formation. It has been suggested to have peptidyltransferase activity; this is somewhat controversial. Makes several contacts with the 16S rRNA in the 70S ribosome. The polypeptide is Large ribosomal subunit protein uL2 (Brucella melitensis biotype 1 (strain ATCC 23456 / CCUG 17765 / NCTC 10094 / 16M)).